Reading from the N-terminus, the 329-residue chain is 4-hydroxythreonine-4-phosphate dehydrogenase (329 aa).

2 residues coordinate substrate: histidine 136 and threonine 137. A divalent metal cation contacts are provided by histidine 166, histidine 211, and histidine 266. Lysine 274, asparagine 283, and arginine 292 together coordinate substrate.

The protein belongs to the PdxA family. In terms of assembly, homodimer. The cofactor is Zn(2+). Mg(2+) serves as cofactor. It depends on Co(2+) as a cofactor.

The protein resides in the cytoplasm. It carries out the reaction 4-(phosphooxy)-L-threonine + NAD(+) = 3-amino-2-oxopropyl phosphate + CO2 + NADH. It participates in cofactor biosynthesis; pyridoxine 5'-phosphate biosynthesis; pyridoxine 5'-phosphate from D-erythrose 4-phosphate: step 4/5. Functionally, catalyzes the NAD(P)-dependent oxidation of 4-(phosphooxy)-L-threonine (HTP) into 2-amino-3-oxo-4-(phosphooxy)butyric acid which spontaneously decarboxylates to form 3-amino-2-oxopropyl phosphate (AHAP). The polypeptide is 4-hydroxythreonine-4-phosphate dehydrogenase (Salmonella arizonae (strain ATCC BAA-731 / CDC346-86 / RSK2980)).